The chain runs to 124 residues: MRHYEIVFMVHPDQSEQVPAMIERYTASVTEAGGQVHRLEDWGRRQLAYPINKLHKAHYVLMNVEAPKSVIDELETNFRYNDAVLRNLIVHTKAAVKEASLMAKAKESKTTEVVAEVESKEASE.

This sequence belongs to the bacterial ribosomal protein bS6 family.

In terms of biological role, binds together with bS18 to 16S ribosomal RNA. The chain is Small ribosomal subunit protein bS6 from Haemophilus ducreyi (strain 35000HP / ATCC 700724).